The primary structure comprises 59 residues: Large ribosomal subunit protein eL29 (59 aa).

Basic residues predominate over residues 1–26 (MAKSKNHTAHNQTRKAHRNGIKKPKT). Residues 1–37 (MAKSKNHTAHNQTRKAHRNGIKKPKTYKYPSLKGVDP) are disordered. Lys-52 is covalently cross-linked (Glycyl lysine isopeptide (Lys-Gly) (interchain with G-Cter in ubiquitin)).

It belongs to the eukaryotic ribosomal protein eL29 family. Component of the large ribosomal subunit (LSU). Mature yeast ribosomes consist of a small (40S) and a large (60S) subunit. The 40S small subunit contains 1 molecule of ribosomal RNA (18S rRNA) and 33 different proteins (encoded by 57 genes). The large 60S subunit contains 3 rRNA molecules (25S, 5.8S and 5S rRNA) and 46 different proteins (encoded by 81 genes).

Its subcellular location is the cytoplasm. Its function is as follows. Component of the ribosome, a large ribonucleoprotein complex responsible for the synthesis of proteins in the cell. The small ribosomal subunit (SSU) binds messenger RNAs (mRNAs) and translates the encoded message by selecting cognate aminoacyl-transfer RNA (tRNA) molecules. The large subunit (LSU) contains the ribosomal catalytic site termed the peptidyl transferase center (PTC), which catalyzes the formation of peptide bonds, thereby polymerizing the amino acids delivered by tRNAs into a polypeptide chain. The nascent polypeptides leave the ribosome through a tunnel in the LSU and interact with protein factors that function in enzymatic processing, targeting, and the membrane insertion of nascent chains at the exit of the ribosomal tunnel. This is Large ribosomal subunit protein eL29 from Saccharomyces cerevisiae (strain ATCC 204508 / S288c) (Baker's yeast).